A 1183-amino-acid chain; its full sequence is PAN2-PAN3 deadenylation complex catalytic subunit PAN2 (1183 aa).

2 WD repeats span residues 150–189 (SIEN…KAAQ) and 289–328 (DVSS…ENAA). The interval 331–478 (ENGSIVLPPF…EEIEEELNDG (148 aa)) is linker. The interval 439–470 (AEGRARGKGRRDSGPRFRSEKDKKGTYKDKEE) is disordered. Residues 448 to 469 (RRDSGPRFRSEKDKKGTYKDKE) are compositionally biased toward basic and acidic residues. A USP domain is found at 479–864 (EVPKYYRKVE…VPAVIILERE (386 aa)). In terms of domain architecture, Exonuclease spans 916–1085 (VAIDAEFVAL…HDSIEDAHFA (170 aa)). The a divalent metal cation site is built by aspartate 919, glutamate 921, aspartate 1028, and aspartate 1081. Residues 1155 to 1183 (KSRMATPPPPTKLGLPQWASQNSPSPLRR) form a disordered region. Residues 1172-1183 (WASQNSPSPLRR) show a composition bias toward polar residues.

It belongs to the peptidase C19 family. PAN2 subfamily. As to quaternary structure, forms a heterotrimer with an asymmetric homodimer of the regulatory subunit PAN3 to form the poly(A)-nuclease (PAN) deadenylation complex. A divalent metal cation serves as cofactor.

The protein localises to the cytoplasm. The enzyme catalyses Exonucleolytic cleavage of poly(A) to 5'-AMP.. Its activity is regulated as follows. Positively regulated by the regulatory subunit PAN3. Its function is as follows. Catalytic subunit of the poly(A)-nuclease (PAN) deadenylation complex, one of two cytoplasmic mRNA deadenylases involved in mRNA turnover. PAN specifically shortens poly(A) tails of RNA and the activity is stimulated by poly(A)-binding protein PAB1. PAN deadenylation is followed by rapid degradation of the shortened mRNA tails by the CCR4-NOT complex. Deadenylated mRNAs are then degraded by two alternative mechanisms, namely exosome-mediated 3'-5' exonucleolytic degradation, or deadenylation-dependent mRNA decaping and subsequent 5'-3' exonucleolytic degradation by XRN1. May also be involved in post-transcriptional maturation of mRNA poly(A) tails. This Cryptococcus neoformans var. neoformans serotype D (strain B-3501A) (Filobasidiella neoformans) protein is PAN2-PAN3 deadenylation complex catalytic subunit PAN2.